Here is a 766-residue protein sequence, read N- to C-terminus: 1,4-alpha-glucan branching enzyme GlgB (766 aa).

The active-site Nucleophile is Asp-431. The active-site Proton donor is Glu-484.

The protein belongs to the glycosyl hydrolase 13 family. GlgB subfamily. Monomer.

It catalyses the reaction Transfers a segment of a (1-&gt;4)-alpha-D-glucan chain to a primary hydroxy group in a similar glucan chain.. The protein operates within glycan biosynthesis; glycogen biosynthesis. Functionally, catalyzes the formation of the alpha-1,6-glucosidic linkages in glycogen by scission of a 1,4-alpha-linked oligosaccharide from growing alpha-1,4-glucan chains and the subsequent attachment of the oligosaccharide to the alpha-1,6 position. This is 1,4-alpha-glucan branching enzyme GlgB from Thermosynechococcus vestitus (strain NIES-2133 / IAM M-273 / BP-1).